Consider the following 333-residue polypeptide: Fe(3+)-citrate import system permease protein YfmD (333 aa).

A run of 9 helical transmembrane segments spans residues 13-33, 67-87, 97-117, 121-141, 151-171, 201-221, 238-258, 279-299, and 302-322; these read LMMFIIALIIFIFGLGLNLSV, TLIGVFVGASLAVAGALMQAM, IFGVNAGASLFVVASLVILPA, SSVIFAFAGAAAGGAIVYMIA, LALSGMAVHLFLSSMTQAIII, FSVIGIGLALVFSGSVSVLGL, ILISLIILILSGASVAVAGPI, YVLPFSALFGAILLVYADVLA, and IAFPYESPVGIVTAIIGTPFF.

This sequence belongs to the binding-protein-dependent transport system permease family. FecCD subfamily. In terms of assembly, the complex is composed of one ATP-binding protein (YfmF), two transmembrane proteins (YfmD and YfmE) and a solute-binding protein (YfmC).

Its subcellular location is the cell membrane. Functionally, part of the ABC transporter complex YfmCDEF involved in citrate-dependent Fe(3+) import. Involved in the translocation of the substrate across the membrane. In Bacillus subtilis (strain 168), this protein is Fe(3+)-citrate import system permease protein YfmD (yfmD).